Consider the following 445-residue polypeptide: Phosphoglucosamine mutase (445 aa).

Residue Ser-102 is the Phosphoserine intermediate of the active site. Mg(2+) contacts are provided by Ser-102, Asp-241, Asp-243, and Asp-245. A Phosphoserine modification is found at Ser-102.

It belongs to the phosphohexose mutase family. The cofactor is Mg(2+). In terms of processing, activated by phosphorylation.

The catalysed reaction is alpha-D-glucosamine 1-phosphate = D-glucosamine 6-phosphate. Its function is as follows. Catalyzes the conversion of glucosamine-6-phosphate to glucosamine-1-phosphate. This is Phosphoglucosamine mutase from Escherichia coli O157:H7.